A 322-amino-acid chain; its full sequence is Adenine deaminase (322 aa).

Zn(2+) contacts are provided by His11, His13, and His189. Catalysis depends on Glu192, which acts as the Proton donor. Asp270 contributes to the Zn(2+) binding site. Asp271 contacts substrate.

It belongs to the metallo-dependent hydrolases superfamily. Adenosine and AMP deaminases family. Adenine deaminase type 2 subfamily. Zn(2+) serves as cofactor.

The enzyme catalyses adenine + H2O + H(+) = hypoxanthine + NH4(+). In terms of biological role, catalyzes the hydrolytic deamination of adenine to hypoxanthine. Plays an important role in the purine salvage pathway and in nitrogen catabolism. The polypeptide is Adenine deaminase (Rhizobium johnstonii (strain DSM 114642 / LMG 32736 / 3841) (Rhizobium leguminosarum bv. viciae)).